A 488-amino-acid chain; its full sequence is Diacylglycerol O-acyltransferase 1 (488 aa).

A disordered region spans residues 1–57 (MGDRGSSRRRRTGSRPSSHGGGGPAAAEEEVRDAAAGPDVGAAGDAPAPAPNKDGDA). Residues 1-83 (MGDRGSSRRR…SLFSSDSGFS (83 aa)) are Cytoplasmic-facing. The tract at residues 1 to 91 (MGDRGSSRRR…FSNYRGILNW (91 aa)) is involved in homomerization. Phosphoserine is present on residues S17 and S18. Positions 34-47 (AAAGPDVGAAGDAP) are enriched in low complexity. Residues 84-118 (NYRGILNWCVVMLILSNARLFLENLIKYGILVDPI) form a helical membrane-spanning segment. Over 119-130 (QVVSLFLKDPYS) the chain is Lumenal. The extracellular loop 1 (EL1) stretch occupies residues 119–130 (QVVSLFLKDPYS). The helical transmembrane segment at 131-156 (WPAPCLVIAANVFAVAAFQVEKRLAV) threads the bilayer. An MBOAT fold region spans residues 131–488 (WPAPCLVIAA…LNYEAPAAEA (358 aa)). The Cytoplasmic segment spans residues 157 to 161 (GALTE). A helical transmembrane segment spans residues 162–184 (QAGLLLHVANLATILCFPAAVVL). Over 185-191 (LVESITP) the chain is Lumenal. A helical membrane pass occupies residues 192 to 223 (VGSLLALMAHTILFLKLFSYRDVNSWCRRARA). The Cytoplasmic portion of the chain corresponds to 224–273 (KAASAGKKASSAAAPHTVSYPDNLTYRDLYYFLFAPTLCYELNFPRSPRI). Residues 224–276 (KAASAGKKASSAAAPHTVSYPDNLTYRDLYYFLFAPTLCYELNFPRSPRIRKR) form an intracellular loop 1 (IL1) region. A helical transmembrane segment spans residues 274-308 (RKRFLLRRILEMLFFTQLQVGLIQQWMVPTIQNSM). The Lumenal portion of the chain corresponds to 309–315 (KPFKDMD). A helical membrane pass occupies residues 316–353 (YSRIIERLLKLAVPNHLIWLIFFYWLFHSCLNAVAELM). Residues 354-399 (QFGDREFYRDWWNSESVTYFWQNWNIPVHKWCIRHFYKPMLRRGSS) lie on the Cytoplasmic side of the membrane. Positions 354–399 (QFGDREFYRDWWNSESVTYFWQNWNIPVHKWCIRHFYKPMLRRGSS) are intracellular loop 2 (IL2). The FYXDWWN motif motif lies at 360-366 (FYRDWWN). An acyl-CoA is bound by residues 374-382 (WQNWNIPVH), Y390, and R404. The interval 380–394 (PVHKWCIRHFYKPML) is amphipathic helix (AH). Residues 400-420 (KWMARTGVFLASAFFHEYLVS) traverse the membrane as a helical segment. The active site involves H415. Over 421-428 (VPLRMFRL) the chain is Lumenal. Residues 429–447 (WAFTGMMAQIPLAWFVGRF) form a helical membrane-spanning segment. Topologically, residues 448-449 (FQ) are cytoplasmic. A helical membrane pass occupies residues 450–481 (GNYGNAAVWLSLIIGQPIAVLMYVHDYYVLNY). Y477 is a binding site for an acyl-CoA. The Lumenal portion of the chain corresponds to 482 to 488 (EAPAAEA).

It belongs to the membrane-bound acyltransferase family. Sterol o-acyltransferase subfamily. Homodimer or homotetramer; both forms have similar enzymatic activities.

It is found in the endoplasmic reticulum membrane. It catalyses the reaction an acyl-CoA + a 1,2-diacyl-sn-glycerol = a triacyl-sn-glycerol + CoA. The enzyme catalyses all-trans-retinol + an acyl-CoA = an all-trans-retinyl ester + CoA. It carries out the reaction 2-(9Z-octadecenoyl)-glycerol + (9Z)-octadecenoyl-CoA = 1,2-di-(9Z-octadecenoyl)-sn-glycerol + CoA. The catalysed reaction is 1,2-di-(9Z-octadecenoyl)-sn-glycerol + (9Z)-octadecenoyl-CoA = 1,2,3-tri-(9Z-octadecenoyl)-glycerol + CoA. It catalyses the reaction all-trans-retinol + hexadecanoyl-CoA = all-trans-retinyl hexadecanoate + CoA. The enzyme catalyses 1-O-(9Z-octadecenyl)-glycerol + (9Z)-octadecenoyl-CoA = 1-O-(9Z-octadecyl)-3-(9Z-octadecenoyl)-glycerol + CoA. It carries out the reaction 1-O-(9Z-octadecyl)-3-(9Z-octadecenoyl)-glycerol + (9Z)-octadecenoyl-CoA = 1-O-(9Z-octadecenyl)-2,3-di-(9Z-octadecenoyl)glycerol + CoA. The catalysed reaction is 1-(9Z-octadecenoyl)-glycerol + (9Z)-octadecenoyl-CoA = 1,2-di-(9Z-octadecenoyl)-glycerol + CoA. It catalyses the reaction 1,2-di-(9Z-octadecenoyl)-glycerol + (9Z)-octadecenoate + H(+) = 1,2,3-tri-(9Z-octadecenoyl)-glycerol + H2O. The enzyme catalyses 1-octadecanoyl-2-(5Z,8Z,11Z,14Z-eicosatetraenoyl)-sn-glycerol + (9Z)-octadecenoyl-CoA = 1-octadecanoyl-2-(5Z,8Z,11Z,14Z)-eicosatetraenoyl-3-(9Z)-octadecenoyl-sn-glycerol + CoA. It carries out the reaction hexadecane-1,2-diol + 2 hexadecanoyl-CoA = 1,2-O,O-dihexadecanoyl-1,2-hexadecanediol + 2 CoA. The catalysed reaction is hexadecane-1,2-diol + hexadecanoyl-CoA = 2-hydroxyhexadecyl hexadecanoate + CoA. It catalyses the reaction 2-(9Z-octadecenoyl)-glycerol + hexadecanoyl-CoA = 1-hexadecanoyl-2-(9Z-octadecenoyl)-sn-glycerol + CoA. The enzyme catalyses 1,2-di-(9Z-octadecenoyl)-sn-glycerol + hexadecanoyl-CoA = 1,2-di-(9Z)-octadecenoyl-3-hexadecanoyl-sn-glycerol + CoA. It carries out the reaction hexadecan-1-ol + hexadecanoyl-CoA = hexadecanyl hexadecanoate + CoA. The catalysed reaction is 13-cis-retinol + hexadecanoyl-CoA = 13-cis-retinyl hexadecanoate + CoA. It catalyses the reaction 1,3-di-(9Z-octadecenoyl)-glycerol + (9Z)-octadecenoyl-CoA = 1,2,3-tri-(9Z-octadecenoyl)-glycerol + CoA. The enzyme catalyses 2,3-di-(9Z)-octadecenoyl-sn-glycerol + (9Z)-octadecenoyl-CoA = 1,2,3-tri-(9Z-octadecenoyl)-glycerol + CoA. It functions in the pathway lipid metabolism; glycerolipid metabolism. With respect to regulation, XP620 is a selective DGAT1 inhibitor. In terms of biological role, catalyzes the terminal and only committed step in triacylglycerol synthesis by using diacylglycerol and fatty acyl CoA as substrates. Highly expressed in epithelial cells of the small intestine and its activity is essential for the absorption of dietary fats. In liver, plays a role in esterifying exogenous fatty acids to glycerol, and is required to synthesize fat for storage. Also present in female mammary glands, where it produces fat in the milk. May be involved in VLDL (very low density lipoprotein) assembly. In contrast to DGAT2 it is not essential for survival. Functions as the major acyl-CoA retinol acyltransferase (ARAT) in the skin, where it acts to maintain retinoid homeostasis and prevent retinoid toxicity leading to skin and hair disorders. Exhibits additional acyltransferase activities, includin acyl CoA:monoacylglycerol acyltransferase (MGAT), wax monoester and wax diester synthases. Also able to use 1-monoalkylglycerol (1-MAkG) as an acyl acceptor for the synthesis of monoalkyl-monoacylglycerol (MAMAG). In Homo sapiens (Human), this protein is Diacylglycerol O-acyltransferase 1.